We begin with the raw amino-acid sequence, 342 residues long: Phosphate acyltransferase (342 aa).

The protein belongs to the PlsX family. Homodimer. Probably interacts with PlsY.

Its subcellular location is the cytoplasm. The enzyme catalyses a fatty acyl-[ACP] + phosphate = an acyl phosphate + holo-[ACP]. Its pathway is lipid metabolism; phospholipid metabolism. Catalyzes the reversible formation of acyl-phosphate (acyl-PO(4)) from acyl-[acyl-carrier-protein] (acyl-ACP). This enzyme utilizes acyl-ACP as fatty acyl donor, but not acyl-CoA. This is Phosphate acyltransferase from Shewanella amazonensis (strain ATCC BAA-1098 / SB2B).